We begin with the raw amino-acid sequence, 157 residues long: Endoribonuclease YbeY (157 aa).

Positions 114, 118, and 124 each coordinate Zn(2+).

The protein belongs to the endoribonuclease YbeY family. Zn(2+) serves as cofactor.

The protein localises to the cytoplasm. In terms of biological role, single strand-specific metallo-endoribonuclease involved in late-stage 70S ribosome quality control and in maturation of the 3' terminus of the 16S rRNA. This Salmonella agona (strain SL483) protein is Endoribonuclease YbeY.